Consider the following 299-residue polypeptide: Tyrosine recombinase XerC (299 aa).

The Core-binding (CB) domain occupies 1–85; the sequence is MQNELDAYFE…SVRGLYRYLN (85 aa). Positions 106–285 constitute a Tyr recombinase domain; it reads RLPRLLDTDR…DFQHLAKVYD (180 aa). Catalysis depends on residues arginine 146, lysine 170, histidine 237, arginine 240, and histidine 263. Tyrosine 272 functions as the O-(3'-phospho-DNA)-tyrosine intermediate in the catalytic mechanism.

Belongs to the 'phage' integrase family. XerC subfamily. In terms of assembly, forms a cyclic heterotetrameric complex composed of two molecules of XerC and two molecules of XerD.

The protein localises to the cytoplasm. In terms of biological role, site-specific tyrosine recombinase, which acts by catalyzing the cutting and rejoining of the recombining DNA molecules. The XerC-XerD complex is essential to convert dimers of the bacterial chromosome into monomers to permit their segregation at cell division. It also contributes to the segregational stability of plasmids. The polypeptide is Tyrosine recombinase XerC (Stutzerimonas stutzeri (strain A1501) (Pseudomonas stutzeri)).